Reading from the N-terminus, the 217-residue chain is GRB2-related adapter protein (217 aa).

In terms of domain architecture, SH3 1 spans 1–58 (MESVALYSFQATESDELAFNKGDTLKILNMEDDQNWYKAELRGAEGFVPKNYIRLKPH). In terms of domain architecture, SH2 spans 60–152 (WYSGRISRQL…KRQVFLQDEE (93 aa)). Residues 158 to 217 (PRACFAQAQFDFSAQDPSQLSFRRGDIIEVLERLDPSWWRGRLSGRIGFFPRSYVQPVHM) form the SH3 2 domain.

It belongs to the GRB2/sem-5/DRK family. Associates through its SH2 domain with ligand-activated receptors for stem cell factor (KIT) and erythropoietin (EPOR). Also forms a stable complex with the Bcr-Abl oncoprotein. GRAP is associated with the Ras guanine nucleotide exchange factor SOS1, primarily through its N-terminal SH3 domain. Interacts with phosphorylated LAT upon TCR activation. Interacts with SHB.

It is found in the membrane. The protein resides in the synapse. In terms of biological role, couples signals from receptor and cytoplasmic tyrosine kinases to the Ras signaling pathway. Plays a role in the inner ear and in hearing. The polypeptide is GRB2-related adapter protein (GRAP) (Bos taurus (Bovine)).